The following is a 249-amino-acid chain: Probable transcriptional regulatory protein mll3945 (249 aa).

It belongs to the TACO1 family.

The protein resides in the cytoplasm. In Mesorhizobium japonicum (strain LMG 29417 / CECT 9101 / MAFF 303099) (Mesorhizobium loti (strain MAFF 303099)), this protein is Probable transcriptional regulatory protein mll3945.